The following is a 142-amino-acid chain: Large ribosomal subunit protein uL13 (142 aa).

Belongs to the universal ribosomal protein uL13 family. In terms of assembly, part of the 50S ribosomal subunit.

Its function is as follows. This protein is one of the early assembly proteins of the 50S ribosomal subunit, although it is not seen to bind rRNA by itself. It is important during the early stages of 50S assembly. This Treponema pallidum (strain Nichols) protein is Large ribosomal subunit protein uL13.